The sequence spans 504 residues: Maturase K (504 aa).

The protein belongs to the intron maturase 2 family. MatK subfamily.

The protein localises to the plastid. Its subcellular location is the chloroplast. Functionally, usually encoded in the trnK tRNA gene intron. Probably assists in splicing its own and other chloroplast group II introns. The sequence is that of Maturase K from Prionotes cerinthoides (Climbing heath).